The sequence spans 395 residues: ATP phosphoribosyltransferase regulatory subunit (395 aa).

The protein belongs to the class-II aminoacyl-tRNA synthetase family. HisZ subfamily. In terms of assembly, heteromultimer composed of HisG and HisZ subunits.

Its subcellular location is the cytoplasm. It participates in amino-acid biosynthesis; L-histidine biosynthesis; L-histidine from 5-phospho-alpha-D-ribose 1-diphosphate: step 1/9. In terms of biological role, required for the first step of histidine biosynthesis. May allow the feedback regulation of ATP phosphoribosyltransferase activity by histidine. In Stutzerimonas stutzeri (Pseudomonas stutzeri), this protein is ATP phosphoribosyltransferase regulatory subunit.